We begin with the raw amino-acid sequence, 347 residues long: NADH-ubiquinone oxidoreductase chain 2 (347 aa).

The next 10 membrane-spanning stretches (helical) occupy residues 3–23 (PPIL…VMLS), 25–45 (HWLL…PILM), 66–86 (ASML…QWMI), 111–131 (FHFW…MILL), 149–169 (INTD…GWGG), 178–198 (IMAY…IYNP), 201–221 (MFLN…LFML), 237–257 (IPLI…LPPL), 274–294 (DMIV…YFYM), and 325–345 (LLPP…MMSI).

It belongs to the complex I subunit 2 family. Core subunit of respiratory chain NADH dehydrogenase (Complex I) which is composed of 45 different subunits. Interacts with TMEM242.

The protein localises to the mitochondrion inner membrane. It catalyses the reaction a ubiquinone + NADH + 5 H(+)(in) = a ubiquinol + NAD(+) + 4 H(+)(out). Its function is as follows. Core subunit of the mitochondrial membrane respiratory chain NADH dehydrogenase (Complex I) which catalyzes electron transfer from NADH through the respiratory chain, using ubiquinone as an electron acceptor. Essential for the catalytic activity and assembly of complex I. This chain is NADH-ubiquinone oxidoreductase chain 2, found in Vulpes vulpes (Red fox).